Reading from the N-terminus, the 372-residue chain is Hydrogenase-1 small chain (372 aa).

The segment at residues 1–45 is a signal peptide (tat-type signal); that stretch reads MNNEETFYQAMRRQGVTRRSFLKYCSLAATSLGLGAGMAPKIAWA. Topologically, residues 46–326 are periplasmic; sequence LENKPRIPVV…QMGTHSTADT (281 aa). C62, C65, C160, C194, H232, C235, C260, and C266 together coordinate [4Fe-4S] cluster. Positions 275, 294, and 297 each coordinate [3Fe-4S] cluster. Residues 327–347 form a helical membrane-spanning segment; that stretch reads VGLTALGVVAAAVGVHAVASA. Positions 347–372 are disordered; sequence AVDQRRRHNQQPTETEHQPGNEDKQA. Over 348–372 the chain is Cytoplasmic; it reads VDQRRRHNQQPTETEHQPGNEDKQA. The span at 360–372 shows a compositional bias: basic and acidic residues; sequence ETEHQPGNEDKQA.

This sequence belongs to the [NiFe]/[NiFeSe] hydrogenase small subunit family. Heterodimer of a large and a small subunit. [4Fe-4S] cluster serves as cofactor. [3Fe-4S] cluster is required as a cofactor. In terms of processing, predicted to be exported by the Tat system. The position of the signal peptide cleavage has not been experimentally proven.

Its subcellular location is the cell inner membrane. It carries out the reaction H2 + A = AH2. In terms of biological role, this is one of three E.coli hydrogenases synthesized in response to different physiological conditions. HYD1 is believed to have a role in hydrogen cycling during fermentative growth. This Escherichia coli O6:H1 (strain CFT073 / ATCC 700928 / UPEC) protein is Hydrogenase-1 small chain (hyaA).